Consider the following 515-residue polypeptide: Vacuolar segregation protein PEP7 (515 aa).

Residues 6-29 (VSCPICLRKFDNLQALNAHLDVEH) form a C2H2-type zinc finger. The disordered stretch occupies residues 36 to 58 (DSLGSNDSRLVNGKQKKARSVDS). Residues 72 to 137 (KKGKSCCHTC…CCHDCFVTKP (66 aa)) form an FYVE-type 1; atypical zinc finger. Residues Cys-78, Cys-81, Cys-94, Cys-97, Cys-102, His-105, Cys-129, Cys-132, Cys-221, Cys-224, Cys-237, Cys-240, Cys-245, Cys-252, Cys-289, and Cys-292 each coordinate Zn(2+). The FYVE-type 2 zinc finger occupies 215 to 297 (DRSVLFCNIC…LCSHCIDMLF (83 aa)).

As to quaternary structure, interacts with VPS21, VPS45, PEP3 and PEP5.

The protein resides in the vacuole membrane. Functionally, required for vacuole segregation and vacuole protein sorting. Possibly part of a complex which tethers the vacuole membrane to microtubules, either directly or via kinesin or dynein-like motor proteins. Probably functions in several interorganelle traffic pathways. This chain is Vacuolar segregation protein PEP7 (PEP7), found in Saccharomyces cerevisiae (strain ATCC 204508 / S288c) (Baker's yeast).